Here is a 443-residue protein sequence, read N- to C-terminus: UPF0597 protein Dvul_2496 (443 aa).

Residues 156–178 (GMERAPEADGTLHGGASCEPSAS) form a disordered region.

Belongs to the UPF0597 family.

This is UPF0597 protein Dvul_2496 from Nitratidesulfovibrio vulgaris (strain DP4) (Desulfovibrio vulgaris).